A 325-amino-acid chain; its full sequence is Elongation factor P--(R)-beta-lysine ligase (325 aa).

Residue 76-78 (SPE) coordinates substrate. Residues 100-102 (RNE) and Asn-109 each bind ATP. Tyr-118 is a substrate binding site. 244-245 (EL) contacts ATP. A substrate-binding site is contributed by Glu-251. Gly-300 provides a ligand contact to ATP.

It belongs to the class-II aminoacyl-tRNA synthetase family. EpmA subfamily. In terms of assembly, homodimer.

It catalyses the reaction D-beta-lysine + L-lysyl-[protein] + ATP = N(6)-((3R)-3,6-diaminohexanoyl)-L-lysyl-[protein] + AMP + diphosphate + H(+). Functionally, with EpmB is involved in the beta-lysylation step of the post-translational modification of translation elongation factor P (EF-P) on 'Lys-34'. Catalyzes the ATP-dependent activation of (R)-beta-lysine produced by EpmB, forming a lysyl-adenylate, from which the beta-lysyl moiety is then transferred to the epsilon-amino group of EF-P 'Lys-34'. This Salmonella gallinarum (strain 287/91 / NCTC 13346) protein is Elongation factor P--(R)-beta-lysine ligase.